Here is a 275-residue protein sequence, read N- to C-terminus: Tryptophan synthase alpha chain (275 aa).

Catalysis depends on proton acceptor residues Glu-49 and Asp-60.

Belongs to the TrpA family. In terms of assembly, tetramer of two alpha and two beta chains.

It catalyses the reaction (1S,2R)-1-C-(indol-3-yl)glycerol 3-phosphate + L-serine = D-glyceraldehyde 3-phosphate + L-tryptophan + H2O. It participates in amino-acid biosynthesis; L-tryptophan biosynthesis; L-tryptophan from chorismate: step 5/5. The alpha subunit is responsible for the aldol cleavage of indoleglycerol phosphate to indole and glyceraldehyde 3-phosphate. The protein is Tryptophan synthase alpha chain of Nitrosomonas europaea (strain ATCC 19718 / CIP 103999 / KCTC 2705 / NBRC 14298).